Here is a 390-residue protein sequence, read N- to C-terminus: Dual-specificity RNA methyltransferase RlmN (390 aa).

Glu110 functions as the Proton acceptor in the catalytic mechanism. The region spanning 116–355 is the Radical SAM core domain; that stretch reads EADRATLCVS…VIIRKTRGDD (240 aa). Cysteines 123 and 360 form a disulfide. Positions 130, 134, and 137 each coordinate [4Fe-4S] cluster. S-adenosyl-L-methionine-binding positions include 184–185, Ser216, 238–240, and Asn317; these read GE and SLH. Catalysis depends on Cys360, which acts as the S-methylcysteine intermediate.

This sequence belongs to the radical SAM superfamily. RlmN family. It depends on [4Fe-4S] cluster as a cofactor.

The protein localises to the cytoplasm. The enzyme catalyses adenosine(2503) in 23S rRNA + 2 reduced [2Fe-2S]-[ferredoxin] + 2 S-adenosyl-L-methionine = 2-methyladenosine(2503) in 23S rRNA + 5'-deoxyadenosine + L-methionine + 2 oxidized [2Fe-2S]-[ferredoxin] + S-adenosyl-L-homocysteine. It catalyses the reaction adenosine(37) in tRNA + 2 reduced [2Fe-2S]-[ferredoxin] + 2 S-adenosyl-L-methionine = 2-methyladenosine(37) in tRNA + 5'-deoxyadenosine + L-methionine + 2 oxidized [2Fe-2S]-[ferredoxin] + S-adenosyl-L-homocysteine. Its function is as follows. Specifically methylates position 2 of adenine 2503 in 23S rRNA and position 2 of adenine 37 in tRNAs. m2A2503 modification seems to play a crucial role in the proofreading step occurring at the peptidyl transferase center and thus would serve to optimize ribosomal fidelity. In Haemophilus influenzae (strain 86-028NP), this protein is Dual-specificity RNA methyltransferase RlmN.